Here is a 317-residue protein sequence, read N- to C-terminus: MTSTATFREDFHSLRAGGLNWDSLPLRLFGKGNAKFWDPADIDFTRDAEDWQGLTEEERRSVAMLCSQFIAGEEAVTQDLQPFMAAMAAEGRFGDEMYLTQFCFEEAKHTQVFRLWMDAVGLTGDLHSHVAENPGYRAIFYEELPRSLNALHDDPSPANQVRASVTYNHVVEGTLALTGYFAWQKICRSRGILPGMQEVVRRIGDDERRHMAWGTFTCRRHVAADESNWDVVQEQMQHLLPLAVTQIQWRPEDAPEETPFRLDIDELAAYASDRAGRRLGAISAARGVPVEQIDVDASPEQLEDQFGVEDAAALEKA.

Mn(2+) contacts are provided by glutamate 73, glutamate 106, and histidine 109. The 3-(O4'-tyrosyl)-valine (Val-Tyr) cross-link spans valine 76 to tyrosine 167. Residue glutamate 106 participates in Fe cation binding. 3 residues coordinate Fe cation: glutamate 172, glutamate 207, and histidine 210.

This sequence belongs to the ribonucleoside diphosphate reductase small chain family. R2-like ligand binding oxidase subfamily. As to quaternary structure, homodimer. Fe cation serves as cofactor. It depends on Mn(2+) as a cofactor.

In terms of biological role, probable oxidase. The polypeptide is R2-like ligand binding oxidase (Saccharopolyspora erythraea (strain ATCC 11635 / DSM 40517 / JCM 4748 / NBRC 13426 / NCIMB 8594 / NRRL 2338)).